A 58-amino-acid polypeptide reads, in one-letter code: UPF0391 membrane protein OCAR_5266/OCA5_c27040 (58 aa).

The next 2 membrane-spanning stretches (helical) occupy residues 4–24 (WVVTFLIIALVAGLLGFGGIA) and 30–50 (IAKIVFFIAIVLFAVSAVVGL).

The protein belongs to the UPF0391 family.

Its subcellular location is the cell membrane. This is UPF0391 membrane protein OCAR_5266/OCA5_c27040 from Afipia carboxidovorans (strain ATCC 49405 / DSM 1227 / KCTC 32145 / OM5) (Oligotropha carboxidovorans).